The sequence spans 591 residues: MEKRTSYCGELNEAHIGQSVVLHGWVQKRRDLGGLIFIDLRDREGIVQVVFNPEFSKEALEIADSVRNEFVVTIKGTVHARGEKAINDKLATGKVEVLAEEITILNTSKTPPFYIEDGVNVSDELRLKYRYLDLRRPEMNNIFKMRHTVTRTFRNKLDALGFFDIETPYLTKSTPEGARDYLVPSRVYPGNFYALPQSPQILKQLLMTAGFDKYYQIVRCFRDEDLRGDRQPEFTQIDLETSFLTKEEIQAITEDMLVDVVKEAKNITIDKPFPRMTYKEAMDRFGSDKPDIRFGLELVNVSDVVKDVDFKVFQSAIENGGEVKAINAKAAAANFSRKDLDALGVFVANYGAKGLAWLKVEAGELKGPIAKFFPEEKATELKASLQAEDGDLLLFAADKADIVAASLGALRNKLGKELNLINEEELAFLWVTDWPLFEYDEEAGRYVSAHHPFTLPKEEDIPLLETDSSKVMAEAYDIVLNGYEIGGGSLRIYKKEVQESMFRALGFTDESAKEQFGFLMDALEYGTPPHGGIALGLDRIVMILAGRNNLRDTIAFPKTGSAVDPLTNAPGEVSEAQLAELKLETVKKETN.

E176 contacts L-aspartate. An aspartate region spans residues 200 to 203; the sequence is QILK. R222 provides a ligand contact to L-aspartate. Residues 222–224 and Q231 contribute to the ATP site; that span reads RDE. H450 provides a ligand contact to L-aspartate. E484 serves as a coordination point for ATP. L-aspartate is bound at residue R491. 536 to 539 provides a ligand contact to ATP; the sequence is GLDR.

It belongs to the class-II aminoacyl-tRNA synthetase family. Type 1 subfamily. Homodimer.

The protein localises to the cytoplasm. The catalysed reaction is tRNA(Asp) + L-aspartate + ATP = L-aspartyl-tRNA(Asp) + AMP + diphosphate. Its function is as follows. Catalyzes the attachment of L-aspartate to tRNA(Asp) in a two-step reaction: L-aspartate is first activated by ATP to form Asp-AMP and then transferred to the acceptor end of tRNA(Asp). This is Aspartate--tRNA ligase from Listeria monocytogenes serotype 4b (strain F2365).